A 447-amino-acid chain; its full sequence is Large ribosomal subunit protein bL27m (447 aa).

Composition is skewed to basic and acidic residues over residues 377–402 and 409–447; these read QREAKKAREGGAAAEKSEKKEVKAEK and KVEKPKAPEAAKKESKPKVEEKKAAAAEPKKDSKTEKKD. The interval 377-447 is disordered; it reads QREAKKAREG…KKDSKTEKKD (71 aa).

Belongs to the bacterial ribosomal protein bL27 family. As to quaternary structure, component of the mitochondrial large ribosomal subunit (mt-LSU). Mature N.crassa 74S mitochondrial ribosomes consist of a small (37S) and a large (54S) subunit. The 37S small subunit contains a 16S ribosomal RNA (16S mt-rRNA) and 32 different proteins. The 54S large subunit contains a 23S rRNA (23S mt-rRNA) and 42 different proteins.

The protein resides in the mitochondrion. Component of the mitochondrial ribosome (mitoribosome), a dedicated translation machinery responsible for the synthesis of mitochondrial genome-encoded proteins, including at least some of the essential transmembrane subunits of the mitochondrial respiratory chain. The mitoribosomes are attached to the mitochondrial inner membrane and translation products are cotranslationally integrated into the membrane. This chain is Large ribosomal subunit protein bL27m (mrp7), found in Neurospora crassa (strain ATCC 24698 / 74-OR23-1A / CBS 708.71 / DSM 1257 / FGSC 987).